A 473-amino-acid polypeptide reads, in one-letter code: MKTDTPSLETPQAARLRRRQLIRQLLERDKTPLAILFMAAVVGTLVGLAAVAFDKGVAWLQNQRMEALVHTADNYPLLLTVAFLCSAVLAMFGYFLVRKYAPEAGGSGIPEIEGALEDQRPVRWWRVLPVKFFGGLGTLGGGMVLGREGPTVQIGGNIGRMVLDIFRLKGDEARHTLLATGAAAGLAAAFNAPLAGILFIIEEMRPQFRYTLISIKAVFIGVIMSTIMYRIFNHEVALIDVGKLSDAPLNTLWLYLILGIIFGIFGPIFNKWVLGMQDLLHRVHGGNITKWVLMGGAIGGLCGLLGFVAPATSGGGFNLIPIATAGNFSMGMLVFIFVARVITTLLCFSSGAPGGIFAPMLALGTVLGTAFGMVVVELFPQYHLEAGTFAIAGMGALLAASIRAPLTGIILVLEMTDNYQLILPMIITGLGATLLAQFTGGKPLYSEILARTLAKQEAEQLARSKAASASENT.

The Cytoplasmic portion of the chain corresponds to 1-32; the sequence is MKTDTPSLETPQAARLRRRQLIRQLLERDKTP. A helical membrane pass occupies residues 33–69; sequence LAILFMAAVVGTLVGLAAVAFDKGVAWLQNQRMEALV. Residues 70–76 lie on the Periplasmic side of the membrane; the sequence is HTADNYP. The chain crosses the membrane as a helical span at residues 77–100; sequence LLLTVAFLCSAVLAMFGYFLVRKY. The short motif at 106-110 is the Selectivity filter part_1 element; sequence GSGIP. Residue Ser107 participates in chloride binding. The segment at residues 109–116 is an intramembrane region (helical); sequence IPEIEGAL. The Cytoplasmic portion of the chain corresponds to 117–123; that stretch reads EDQRPVR. The next 2 membrane-spanning stretches (helical) occupy residues 124 to 141 and 148 to 166; these read WWRV…TLGG and EGPT…LDIF. A Selectivity filter part_2 motif is present at residues 146-150; that stretch reads GREGP. The Cytoplasmic segment spans residues 167 to 176; sequence RLKGDEARHT. Intramembrane regions (helical) lie at residues 177–189 and 193–201; these read LLAT…LAAA and PLAGILFII. The Cytoplasmic segment spans residues 202 to 214; sequence EEMRPQFRYTLIS. The chain crosses the membrane as a helical span at residues 215–232; the sequence is IKAVFIGVIMSTIMYRIF. The Periplasmic segment spans residues 233-252; that stretch reads NHEVALIDVGKLSDAPLNTL. The helical transmembrane segment at 253-281 threads the bilayer; sequence WLYLILGIIFGIFGPIFNKWVLGMQDLLH. The Cytoplasmic portion of the chain corresponds to 282 to 287; sequence RVHGGN. A helical membrane pass occupies residues 288–309; the sequence is ITKWVLMGGAIGGLCGLLGFVA. The Periplasmic segment spans residues 310–329; sequence PATSGGGFNLIPIATAGNFS. Helical transmembrane passes span 330 to 349 and 355 to 376; these read MGML…LCFS and GIFA…MVVV. Residues 355–359 carry the Selectivity filter part_3 motif; sequence GIFAP. Chloride contacts are provided by Ile356 and Phe357. Residues 377–386 lie on the Periplasmic side of the membrane; it reads ELFPQYHLEA. The helical intramembrane region spans 387–401; sequence GTFAIAGMGALLAAS. The segment at residues 402 to 404 is an intramembrane region (note=Loop between two helices); the sequence is IRA. An intramembrane region (helical) is located at residues 405–416; that stretch reads PLTGIILVLEMT. Residues 417–421 constitute an intramembrane region (note=Loop between two helices); the sequence is DNYQL. A helical membrane pass occupies residues 422-438; it reads ILPMIITGLGATLLAQF. The Cytoplasmic portion of the chain corresponds to 439 to 473; it reads TGGKPLYSEILARTLAKQEAEQLARSKAASASENT. Tyr445 is a chloride binding site.

It belongs to the chloride channel (TC 2.A.49) family. ClcA subfamily. Homodimer.

The protein resides in the cell inner membrane. The catalysed reaction is 2 chloride(in) + H(+)(out) = 2 chloride(out) + H(+)(in). Its function is as follows. Proton-coupled chloride transporter. Functions as antiport system and exchanges two chloride ions for 1 proton. Probably acts as an electrical shunt for an outwardly-directed proton pump that is linked to amino acid decarboxylation, as part of the extreme acid resistance (XAR) response. The chain is H(+)/Cl(-) exchange transporter ClcA from Shigella boydii serotype 4 (strain Sb227).